Reading from the N-terminus, the 309-residue chain is Porphobilinogen deaminase (309 aa).

Residue cysteine 241 is modified to S-(dipyrrolylmethanemethyl)cysteine.

The protein belongs to the HMBS family. As to quaternary structure, monomer. Dipyrromethane serves as cofactor.

It catalyses the reaction 4 porphobilinogen + H2O = hydroxymethylbilane + 4 NH4(+). The protein operates within porphyrin-containing compound metabolism; protoporphyrin-IX biosynthesis; coproporphyrinogen-III from 5-aminolevulinate: step 2/4. Its function is as follows. Tetrapolymerization of the monopyrrole PBG into the hydroxymethylbilane pre-uroporphyrinogen in several discrete steps. This is Porphobilinogen deaminase from Bacillus mycoides (strain KBAB4) (Bacillus weihenstephanensis).